Consider the following 53-residue polypeptide: UPF0391 membrane protein KPK_4780 (53 aa).

Transmembrane regions (helical) follow at residues 4-24 and 30-47; these read WGII…GGLA and AAKI…VSLF.

Belongs to the UPF0391 family.

Its subcellular location is the cell membrane. The polypeptide is UPF0391 membrane protein KPK_4780 (Klebsiella pneumoniae (strain 342)).